The chain runs to 313 residues: Fructose-1,6-bisphosphatase class 1 (313 aa).

Residues glutamate 91, aspartate 112, leucine 114, and aspartate 115 each coordinate Mg(2+). Residues 115–118 (DGSS), tyrosine 223, and lysine 254 contribute to the substrate site. Glutamate 260 is a binding site for Mg(2+).

It belongs to the FBPase class 1 family. Homotetramer. It depends on Mg(2+) as a cofactor.

It localises to the cytoplasm. The catalysed reaction is beta-D-fructose 1,6-bisphosphate + H2O = beta-D-fructose 6-phosphate + phosphate. The protein operates within carbohydrate biosynthesis; gluconeogenesis. This is Fructose-1,6-bisphosphatase class 1 from Geobacter sulfurreducens (strain ATCC 51573 / DSM 12127 / PCA).